We begin with the raw amino-acid sequence, 189 residues long: Ion-translocating oxidoreductase complex subunit B (189 aa).

Residues 1-26 (MSAVMIAVVLLGLLALVFGAILGFAA) are hydrophobic. Residues 32-90 (EGDPLVDQVESLLPQTQCGQCGYPGCRPYAEAIAGGDQINKCPPGGTATMEKIAELMGV) form the 4Fe-4S domain. Residues Cys49, Cys52, Cys57, Cys73, Cys114, Cys117, Cys120, Cys124, Cys144, Cys147, Cys150, and Cys154 each contribute to the [4Fe-4S] cluster site. 4Fe-4S ferredoxin-type domains lie at 105–134 (KVAYIREDECIGCTKCIQACPVDAIVGAGK) and 136–164 (MHTVITQDCTGCDLCVEPCPVDCIDMLPV).

The protein belongs to the 4Fe4S bacterial-type ferredoxin family. RnfB subfamily. The complex is composed of six subunits: RnfA, RnfB, RnfC, RnfD, RnfE and RnfG. Requires [4Fe-4S] cluster as cofactor.

The protein localises to the cell inner membrane. Part of a membrane-bound complex that couples electron transfer with translocation of ions across the membrane. The chain is Ion-translocating oxidoreductase complex subunit B from Shewanella amazonensis (strain ATCC BAA-1098 / SB2B).